The following is a 359-amino-acid chain: MTRLTLALDVMGGDFGPSVTVPAALQALNANSQLTLLLVGNPDIITPLLAKADFEQRSRLQIIPAQSVVASDARPSQAIRASRGTSMRVALELVKEGRAEACVSAGNTGALMGLAKLLLKPLEGIERPALVTVLPHQQKGKTVVLDLGANVDCDSTMLVQFAVMGAVLAEEVVGIKNPRVALLNIGEEETKGLDSIREASLMLKTVPTINYIGYLEANELLTGKTDVLVCDGFTGNVTLKTMEGVVRMFLSLLKSQGEGKKRSWWLLLLKRWLQKSLTRRFSHLNPDQYNGACLLGLRGTVIKSHGAANQRAFAVAIEQAVQAVQRQVPQRIAARLESVYPAGFEPLDDGKGVNLRAHR.

The protein belongs to the PlsX family. In terms of assembly, homodimer. Probably interacts with PlsY.

The protein resides in the cytoplasm. The enzyme catalyses a fatty acyl-[ACP] + phosphate = an acyl phosphate + holo-[ACP]. The protein operates within lipid metabolism; phospholipid metabolism. Its function is as follows. Catalyzes the reversible formation of acyl-phosphate (acyl-PO(4)) from acyl-[acyl-carrier-protein] (acyl-ACP). This enzyme utilizes acyl-ACP as fatty acyl donor, but not acyl-CoA. The polypeptide is Phosphate acyltransferase (Salmonella heidelberg (strain SL476)).